A 475-amino-acid chain; its full sequence is MKILFVSYEVYPLAKVGGLADVAGSLPKYLEKEGVSVQIAMPFHKKVKADNIENTGIVITTKHLPEKYSFEIYKTPLPGSGVPVFLFKNDQLIDSDEVYEGTDLALQAIAFSDAVVKFAETLEPDLLHVNDWQPALIPAYISAFYNGKPKTLLTIHNLGYQGEFDKSYFYKTGLPEKLWQEGKAVKNGAFNFLKTGIVTATAISTVSPTYAKEIQTPEYGAGLDETLRALSDRLFGILNGIDYSEYNPATDKRIPVNFDINSLEKKKENKIALQKELGLPVIDVPVIGLISRLVEQKGFDLIEAAAEKILSNDLQFVVLGTGEERYERLFKSLGERFPEKVSANITFNVDLAQKIYAGSDMFLMPSRYEPCGLGQMFAMRYGTIPVVRFTGGLRDTVKEFNPETLEGNGFGFEEYNPDKLLEAVEKAIKIYENKTLWNQLMLNAMNTDCSWDKSAREYIKLYKHVLNSGRDILNA.

Residue K15 coordinates ADP-alpha-D-glucose.

It belongs to the glycosyltransferase 1 family. Bacterial/plant glycogen synthase subfamily.

The catalysed reaction is [(1-&gt;4)-alpha-D-glucosyl](n) + ADP-alpha-D-glucose = [(1-&gt;4)-alpha-D-glucosyl](n+1) + ADP + H(+). It functions in the pathway glycan biosynthesis; glycogen biosynthesis. In terms of biological role, synthesizes alpha-1,4-glucan chains using ADP-glucose. The chain is Glycogen synthase from Kosmotoga olearia (strain ATCC BAA-1733 / DSM 21960 / TBF 19.5.1).